A 330-amino-acid polypeptide reads, in one-letter code: Tryptophan--tRNA ligase (330 aa).

Residues 10-12 and 18-19 contribute to the ATP site; these read QAT and GN. Positions 11–19 match the 'HIGH' region motif; it reads ATGSLHLGN. Residue Asp-134 coordinates L-tryptophan. ATP-binding positions include 146-148, Ile-186, and 195-199; these read GED and KMSKS. The 'KMSKS' region signature appears at 195–199; that stretch reads KMSKS.

The protein belongs to the class-I aminoacyl-tRNA synthetase family. As to quaternary structure, homodimer.

Its subcellular location is the cytoplasm. It catalyses the reaction tRNA(Trp) + L-tryptophan + ATP = L-tryptophyl-tRNA(Trp) + AMP + diphosphate + H(+). Its function is as follows. Catalyzes the attachment of tryptophan to tRNA(Trp). The chain is Tryptophan--tRNA ligase from Rickettsia conorii (strain ATCC VR-613 / Malish 7).